The sequence spans 31 residues: Protamine-YI (31 aa).

The disordered stretch occupies residues 1-31 (ARRRRSSSRPIRRRRPRRRTTRRRRAGRRRR).

Testis.

The protein localises to the nucleus. It localises to the chromosome. Protamines substitute for histones in the chromatin of sperm during the haploid phase of spermatogenesis. They compact sperm DNA into a highly condensed, stable and inactive complex. This is Protamine-YI from Clupea harengus (Atlantic herring).